A 146-amino-acid chain; its full sequence is UPF0260 protein Spea_2441 (146 aa).

It belongs to the UPF0260 family.

This is UPF0260 protein Spea_2441 from Shewanella pealeana (strain ATCC 700345 / ANG-SQ1).